A 62-amino-acid polypeptide reads, in one-letter code: MKENILKQKWAKIMKKHKYKKPKWLIKAEQKAEKMTLEEEKEWIEKAIRVYKDKGIDGLFEI.

This is an uncharacterized protein from Methanocaldococcus jannaschii (strain ATCC 43067 / DSM 2661 / JAL-1 / JCM 10045 / NBRC 100440) (Methanococcus jannaschii).